A 95-amino-acid chain; its full sequence is Small ribosomal subunit protein bS6 (95 aa).

It belongs to the bacterial ribosomal protein bS6 family.

Its function is as follows. Binds together with bS18 to 16S ribosomal RNA. This chain is Small ribosomal subunit protein bS6, found in Acholeplasma laidlawii (strain PG-8A).